Here is a 414-residue protein sequence, read N- to C-terminus: Snake venom metalloproteinase atrolysin-B (414 aa).

An N-terminal signal peptide occupies residues 1 to 20; that stretch reads MIEVLLVTICLAVFPYQGSS. Positions 21–190 are excised as a propeptide; the sequence is IILESGNVND…KASDLNLNPD (170 aa). Gln-191 carries the pyrrolidone carboxylic acid modification. One can recognise a Peptidase M12B domain in the interval 197 to 393; that stretch reads RYIELVVVAD…YKPQCILNKP (197 aa). Positions 200 and 284 each coordinate Ca(2+). 2 disulfide bridges follow: Cys-308/Cys-388 and Cys-348/Cys-355. Residue His-333 participates in Zn(2+) binding. The active site involves Glu-334. Zn(2+)-binding residues include His-337 and His-343. Residues Cys-388, Asn-391, Val-403, Asn-406, Leu-408, Glu-410, and Glu-413 each contribute to the Ca(2+) site. Residues 394–414 constitute a propeptide that is removed on maturation; that stretch reads LRIDPVSTPVSGNELLEAGEE.

This sequence belongs to the venom metalloproteinase (M12B) family. P-I subfamily. Monomer. Zn(2+) serves as cofactor. Post-translationally, the N-terminus is blocked. In terms of tissue distribution, expressed by the venom gland.

Its subcellular location is the secreted. It catalyses the reaction Cleavage of 5-His-|-Leu-6, 10-His-|-Leu-11, 14-Ala-|-Leu-15, 16-Tyr-|-Leu-17 and 23-Gly-|-Phe-24 of insulin B chain. Identical to the cleavage of insulin B chain by atrolysin C. Also cleaves Xaa-|-Ser bonds in glucagon.. Its function is as follows. Snake venom metalloproteinase that impairs hemostasis in the envenomed animal. This is Snake venom metalloproteinase atrolysin-B from Crotalus atrox (Western diamondback rattlesnake).